The sequence spans 218 residues: Adenylate kinase (218 aa).

Position 14-19 (14-19 (GAGKGT)) interacts with ATP. The interval 34-63 (STGDMFRAAIKAGTELGKQAKALMDEGKLV) is NMP. AMP is bound by residues Thr-35, Arg-40, 61–63 (KLV), 89–92 (GFPR), and Gln-96. Residues 126–163 (GRRVHQASGRSYHIVYNPPKVEGKDDVTGEDLIIRADD) are LID. Residues Arg-127 and 136 to 137 (SY) contribute to the ATP site. AMP contacts are provided by Arg-160 and Arg-171. Lys-204 lines the ATP pocket.

The protein belongs to the adenylate kinase family. In terms of assembly, monomer.

Its subcellular location is the cytoplasm. The enzyme catalyses AMP + ATP = 2 ADP. It participates in purine metabolism; AMP biosynthesis via salvage pathway; AMP from ADP: step 1/1. In terms of biological role, catalyzes the reversible transfer of the terminal phosphate group between ATP and AMP. Plays an important role in cellular energy homeostasis and in adenine nucleotide metabolism. This chain is Adenylate kinase, found in Mannheimia succiniciproducens (strain KCTC 0769BP / MBEL55E).